The sequence spans 87 residues: Potassium channel toxin TsTXK-beta/Cryptide TyPep-16 (87 aa).

Positions 1 to 19 (MERKLALLLILGMVTLASC) are cleaved as a signal peptide. In terms of domain architecture, BetaSPN-type CS-alpha/beta spans 53-87 (QFGCPAYEGYCNDHCNDIERKDGECHGFKCKCAKD). 3 disulfide bridges follow: Cys-56/Cys-77, Cys-63/Cys-82, and Cys-67/Cys-84.

The protein belongs to the long chain scorpion toxin family. Class 1 subfamily. As to expression, expressed by the venom gland.

It is found in the secreted. In terms of biological role, specifically blocks voltage-gated potassium channels Kv4.2/KCND2. When measured at the peak current, the blocking effect of this toxin is about 65% and shows an IC(50)=652 nM. However, when measured at a later moment of the depolarising test pulse (500 ms), a 100% block of the current is observed with an IC(50)=313 nM. This may indicate a preference of the toxin for binding the inactivated state of the channel. The inhibition is completely reversible. In vivo, intraplantar injection into rat paw induces overt nociception (licking and lifting behaviors) and decreases the mechanical nociceptive threshold (hyperalgesia). Furthermore, the hyperalgesia is prolonged when intrathecal injections are performed. Functionally, induces discomfort and anxiety in mice, as it moderately diminishes locomotion (but has no effect on rearing behavior). Does not cause hemolysis, mast cell degranulation, LDH release, and does not have antimicrobial activity. Does not cause edema and pain. Its function is as follows. Does not induce hemolytic activity, lactate dehydrogenase (LDH) release from mast cells, mast cell degranulation, and antimicrobial effects. In vivo, injection into mice causes moderate edema formation, but induces very weak or no change in nociceptive sensibility. It also reduces mice locomotion, suggesting an increase in anxiety, but causes no alteration in rearing (standing on hind limbs). The protein is Potassium channel toxin TsTXK-beta/Cryptide TyPep-16 of Tityus serrulatus (Brazilian scorpion).